A 502-amino-acid chain; its full sequence is UPF0371 protein CLK_3516 (502 aa).

The protein belongs to the UPF0371 family.

This chain is UPF0371 protein CLK_3516, found in Clostridium botulinum (strain Loch Maree / Type A3).